The chain runs to 285 residues: Para-Rep C6 (285 aa).

One can recognise a CRESS-DNA virus Rep endonuclease domain in the interval Thr3–Phe99. An RCR-1 motif is present at residues Val10–Leu13. A divalent metal cation contacts are provided by Glu36 and His42. The RCR-2 signature appears at His42–Gln44. The Nuclear localization signal signature appears at Arg52–Arg74. The For DNA cleavage activity role is filled by Tyr82. The RCR-3 signature appears at Tyr82–Lys85. An a divalent metal cation-binding site is contributed by Asp87. The Nuclear localization signal motif lies at Phe99 to His105. Position 175-183 (Gly175–Ser183) interacts with ATP.

The protein belongs to the nanoviridea/circoviridae replication-associated protein family. Homooligomer (Potential). Rep binds to repeated DNA motifs (iterons). Mg(2+) serves as cofactor. The cofactor is Mn(2+).

The protein localises to the host nucleus. It carries out the reaction ATP + H2O = ADP + phosphate + H(+). Functionally, initiates and terminates the replication only of its own subviral DNA molecule. The closed circular ssDNA genome is first converted to a superhelical dsDNA. Rep binds a specific hairpin at the genome origin of replication. Introduces an endonucleolytic nick within the intergenic region of the genome, thereby initiating the rolling circle replication (RCR). Following cleavage, binds covalently to the 5'-phosphate of DNA as a tyrosyl ester. The cleavage gives rise to a free 3'-OH that serves as a primer for the cellular DNA polymerase. The polymerase synthesizes the (+) strand DNA by rolling circle mechanism. After one round of replication, a Rep-catalyzed nucleotidyl transfer reaction releases a circular single-stranded virus genome, thereby terminating the replication. Displays origin-specific DNA cleavage, nucleotidyl transferase, ATPase and helicase activities. The protein is Para-Rep C6 (C6) of Subterranean clover stunt C6 alphasatellite (SCSC6A).